A 787-amino-acid chain; its full sequence is PAN2-PAN3 deadenylation complex subunit pan3 (787 aa).

The tract at residues 1–20 (MNSGLTPSPSPAVAAAGPAG) is disordered. The span at 11 to 20 (PAVAAAGPAG) shows a compositional bias: low complexity. The C3H1-type zinc-finger motif lies at 23 to 51 (GSKLKFCRYYAKDRTCFYGDECQFLHDDQ). Disordered stretches follow at residues 131–162 (EATY…AAHD), 179–210 (TMSQ…MSQS), and 226–291 (GGPT…PPST). Low complexity-rich tracts occupy residues 143–154 (NSSSSPSLLNDS) and 200–210 (STSRLSNMSQS). The PABPC-interacting motif-2 (PAM-2) motif lies at 185-200 (KTPNPTASEFIPKGGS). Polar residues predominate over residues 265–290 (TPNPANYMVPTSASTPVTNSVSQPPS). A pseudokinase domain region spans residues 365–650 (QIDQADMPGV…SVNDIMPMIG (286 aa)). Residues Arg422, 471-478 (DFHAGSET), and 545-546 (TK) contribute to the ATP site. A coiled-coil region spans residues 651-689 (ARFYTQLDAAQMRNDVIEEDLAKEVQNGRLFRLLAKLGT). A knob domain region spans residues 690 to 787 (INERPEFQKD…ELVAAANGQL (98 aa)).

Belongs to the protein kinase superfamily. PAN3 family. As to quaternary structure, homodimer. Forms a heterotrimer with a catalytic subunit pan2 to form the poly(A)-nuclease (PAN) deadenylation complex. Interacts (via PAM-2 motif) with poly(A)-binding protein pabpc1 (via PABC domain), conferring substrate specificity of the enzyme complex. Interacts with the GW182 family proteins tnrc6a, tnrc6b and tnrc6c.

Its subcellular location is the cytoplasm. The protein localises to the P-body. Functionally, regulatory subunit of the poly(A)-nuclease (PAN) deadenylation complex, one of two cytoplasmic mRNA deadenylases involved in general and miRNA-mediated mRNA turnover. PAN specifically shortens poly(A) tails of RNA and the activity is stimulated by poly(A)-binding protein (PABP). PAN deadenylation is followed by rapid degradation of the shortened mRNA tails by the CCR4-NOT complex. Deadenylated mRNAs are then degraded by two alternative mechanisms, namely exosome-mediated 3'-5' exonucleolytic degradation, or deadenylation-dependent mRNA decaping and subsequent 5'-3' exonucleolytic degradation by XRN1. PAN3 acts as a positive regulator for PAN activity, recruiting the catalytic subunit PAN2 to mRNA via its interaction with RNA and PABP, and to miRNA targets via its interaction with GW182 family proteins. This chain is PAN2-PAN3 deadenylation complex subunit pan3, found in Xenopus tropicalis (Western clawed frog).